A 198-amino-acid polypeptide reads, in one-letter code: Recombination protein RecR (198 aa).

A C4-type zinc finger spans residues 58–73; it reads CSVCGNFTDKDPCAIC. The Toprim domain maps to 81-175; the sequence is SIICVIEQPK…KVTRIAHGVP (95 aa).

The protein belongs to the RecR family.

Functionally, may play a role in DNA repair. It seems to be involved in an RecBC-independent recombinational process of DNA repair. It may act with RecF and RecO. In Clostridium botulinum (strain ATCC 19397 / Type A), this protein is Recombination protein RecR.